A 433-amino-acid chain; its full sequence is Enolase (433 aa).

Gln-164 is a binding site for (2R)-2-phosphoglycerate. Glu-206 (proton donor) is an active-site residue. Positions 243, 289, and 316 each coordinate Mg(2+). (2R)-2-phosphoglycerate contacts are provided by Lys-341, Arg-370, Ser-371, and Lys-392. The active-site Proton acceptor is Lys-341.

This sequence belongs to the enolase family. Mg(2+) serves as cofactor.

The protein localises to the cytoplasm. It localises to the secreted. The protein resides in the cell surface. The enzyme catalyses (2R)-2-phosphoglycerate = phosphoenolpyruvate + H2O. The protein operates within carbohydrate degradation; glycolysis; pyruvate from D-glyceraldehyde 3-phosphate: step 4/5. Its function is as follows. Catalyzes the reversible conversion of 2-phosphoglycerate (2-PG) into phosphoenolpyruvate (PEP). It is essential for the degradation of carbohydrates via glycolysis. The polypeptide is Enolase (Borreliella burgdorferi (strain ATCC 35210 / DSM 4680 / CIP 102532 / B31) (Borrelia burgdorferi)).